The sequence spans 247 residues: 5'-nucleotidase SurE (247 aa).

A divalent metal cation contacts are provided by Asp-8, Asp-9, Ser-39, and Asn-91.

It belongs to the SurE nucleotidase family. It depends on a divalent metal cation as a cofactor.

The protein localises to the cytoplasm. It catalyses the reaction a ribonucleoside 5'-phosphate + H2O = a ribonucleoside + phosphate. Functionally, nucleotidase that shows phosphatase activity on nucleoside 5'-monophosphates. The protein is 5'-nucleotidase SurE of Methylobacillus flagellatus (strain ATCC 51484 / DSM 6875 / VKM B-1610 / KT).